Here is a 640-residue protein sequence, read N- to C-terminus: 1-deoxy-D-xylulose-5-phosphate synthase (640 aa).

Thiamine diphosphate-binding positions include histidine 77 and 118–120 (AHA). Aspartate 149 contacts Mg(2+). Residues 150-151 (GS), asparagine 178, tyrosine 287, and glutamate 369 each bind thiamine diphosphate. Residue asparagine 178 coordinates Mg(2+).

It belongs to the transketolase family. DXPS subfamily. Homodimer. It depends on Mg(2+) as a cofactor. Thiamine diphosphate is required as a cofactor.

The catalysed reaction is D-glyceraldehyde 3-phosphate + pyruvate + H(+) = 1-deoxy-D-xylulose 5-phosphate + CO2. Its pathway is metabolic intermediate biosynthesis; 1-deoxy-D-xylulose 5-phosphate biosynthesis; 1-deoxy-D-xylulose 5-phosphate from D-glyceraldehyde 3-phosphate and pyruvate: step 1/1. Catalyzes the acyloin condensation reaction between C atoms 2 and 3 of pyruvate and glyceraldehyde 3-phosphate to yield 1-deoxy-D-xylulose-5-phosphate (DXP). The sequence is that of 1-deoxy-D-xylulose-5-phosphate synthase from Caulobacter vibrioides (strain NA1000 / CB15N) (Caulobacter crescentus).